A 280-amino-acid polypeptide reads, in one-letter code: Small ribosomal subunit protein uS2 (280 aa).

The protein belongs to the universal ribosomal protein uS2 family.

This Desulforapulum autotrophicum (strain ATCC 43914 / DSM 3382 / VKM B-1955 / HRM2) (Desulfobacterium autotrophicum) protein is Small ribosomal subunit protein uS2.